The following is a 161-amino-acid chain: Ribosome maturation factor RimP (161 aa).

The protein belongs to the RimP family.

The protein resides in the cytoplasm. In terms of biological role, required for maturation of 30S ribosomal subunits. This chain is Ribosome maturation factor RimP, found in Rickettsia africae (strain ESF-5).